An 856-amino-acid chain; its full sequence is Villin-like protein (856 aa).

6 Gelsolin-like repeats span residues 22–74 (RKMV…EAQG), 146–186 (VSAT…SEKA), 263–307 (LVVL…QERK), 401–450 (LHRQ…DEIE), 521–561 (TRTM…DQRE), and 624–665 (LVLA…WKEA). The interval 762–796 (SQDSSENDLVRSPKSAGSRTSSSVSSTSATINGGL) is disordered. Residues 776–791 (SAGSRTSSSVSSTSAT) show a composition bias toward low complexity. Positions 790 to 856 (ATINGGLRRE…RQEKKQLGFF (67 aa)) constitute an HP domain.

The protein belongs to the villin/gelsolin family. As to expression, ubiquitously expressed in 16 tissues examined.

Functionally, possible tumor suppressor. The polypeptide is Villin-like protein (VILL) (Homo sapiens (Human)).